Here is a 1298-residue protein sequence, read N- to C-terminus: DNA repair protein rad-50 (1298 aa).

Arg-13, Asn-38, Gly-39, Gly-41, Lys-42, Thr-43, Thr-44, Ile-66, and Gln-158 together coordinate ATP. Thr-43 contacts Mg(2+). Mg(2+) is bound at residue Gln-158. Coiled-coil stretches lie at residues 222–291 (ARQN…IRVE), 317–598 (EERA…QYRK), and 622–660 (AEEV…IEES). The region spanning 622–719 (AEEVSEKLEN…EEIIIVKAEG (98 aa)) is the Zinc-hook domain. Cys-666 and Cys-669 together coordinate Zn(2+). Coiled coils occupy residues 691–719 (LSFP…KAEG) and 754–1092 (KNEK…KESI).

This sequence belongs to the SMC family. RAD50 subfamily. Component of the MRN complex composed of two heterodimers rad-50 and mre-11 associated with a single nbs-1. It depends on Zn(2+) as a cofactor.

The protein localises to the nucleus. It localises to the chromosome. The enzyme catalyses ATP + H2O = ADP + phosphate + H(+). Its function is as follows. Component of the MRN complex, which plays a central role in double-strand break (DSB) repair, DNA recombination, maintenance of telomere integrity and meiosis. The MRN complex is involved in the repair of DNA double-strand breaks (DSBs) via homologous recombination (HR), an error-free mechanism which primarily occurs during S and G2 phases. The complex (1) mediates the end resection of damaged DNA, which generates proper single-stranded DNA, a key initial steps in HR, and is (2) required for the recruitment of other repair factors and efficient activation of ATM and ATR upon DNA damage. The MRN complex possesses single-strand endonuclease activity and double-strand-specific 3'-5' exonuclease activity, which are provided by mre-11, to initiate end resection, which is required for single-strand invasion and recombination. Within the complex, rad-50 is both required to bind DNA ends and hold them in close proximity and regulate the activity of mre-11. Rad-50 provides an ATP-dependent control of mre-11 by positioning DNA ends into the mre-11 active site: ATP-binding induces a large structural change from an open form with accessible mre-11 nuclease sites into a closed form. The sequence is that of DNA repair protein rad-50 (rad-50) from Caenorhabditis elegans.